Here is an 820-residue protein sequence, read N- to C-terminus: Inhibitor of nuclear factor kappa-B kinase epsilon subunit homolog 1 (820 aa).

The region spanning 21–299 (LFNDESIGKG…TDIFEFQPVT (279 aa)) is the Protein kinase domain. ATP-binding positions include 27 to 35 (IGKGAYSEV) and Lys-49. Asp-149 functions as the Proton acceptor in the catalytic mechanism. Residues 758–798 (SPNKEQFPKPEQDSILESSIDEGSTSFESTPPSSPPDVGSN) form a disordered region.

The protein belongs to the protein kinase superfamily. Ser/Thr protein kinase family. In terms of assembly, interacts with allo-1 (via N-terminus); the interaction is direct. Expressed in oocytes.

Its subcellular location is the cytoplasm. It carries out the reaction L-seryl-[protein] + ATP = O-phospho-L-seryl-[protein] + ADP + H(+). The catalysed reaction is L-threonyl-[protein] + ATP = O-phospho-L-threonyl-[protein] + ADP + H(+). Serine/threonine-protein kinase, which plays a role in regulating allophagy, an autophagic process in which paternal organelles, including mitochondria and membranous organelles, are degraded in embryos. Phosphorylates the allophagy receptor allo-1, which is required for allophagy. The protein is Inhibitor of nuclear factor kappa-B kinase epsilon subunit homolog 1 of Caenorhabditis elegans.